The following is an 84-amino-acid chain: U8-theraphotoxin-Hhn1c 1 (84 aa).

A signal peptide spans 1 to 21; it reads MKVVLIVCLVWVMAMMELVSC. 5 disulfide bridges follow: Cys23–Cys35, Cys29–Cys44, Cys34–Cys67, Cys54–Cys75, and Cys69–Cys81.

It belongs to the AVIT (prokineticin) family. In terms of tissue distribution, expressed by the venom gland.

The protein localises to the secreted. This is U8-theraphotoxin-Hhn1c 1 from Cyriopagopus hainanus (Chinese bird spider).